Consider the following 326-residue polypeptide: MATH domain and coiled-coil domain-containing protein At3g58370 (326 aa).

One can recognise an MATH domain in the interval aspartate 7–isoleucine 133. The stretch at leucine 259–aspartate 312 forms a coiled coil.

This is MATH domain and coiled-coil domain-containing protein At3g58370 from Arabidopsis thaliana (Mouse-ear cress).